Consider the following 400-residue polypeptide: Enoyl-[acyl-carrier-protein] reductase [NADH] (400 aa).

NAD(+) is bound by residues 48–53 (GASTGY), 74–75 (FE), 111–112 (DA), and 139–140 (LA). Y225 is a substrate binding site. Y235 functions as the Proton donor in the catalytic mechanism. Residues K244 and 273 to 275 (VVT) each bind NAD(+).

Belongs to the TER reductase family. In terms of assembly, monomer.

It catalyses the reaction a 2,3-saturated acyl-[ACP] + NAD(+) = a (2E)-enoyl-[ACP] + NADH + H(+). The protein operates within lipid metabolism; fatty acid biosynthesis. Functionally, involved in the final reduction of the elongation cycle of fatty acid synthesis (FAS II). Catalyzes the reduction of a carbon-carbon double bond in an enoyl moiety that is covalently linked to an acyl carrier protein (ACP). The polypeptide is Enoyl-[acyl-carrier-protein] reductase [NADH] (Burkholderia lata (strain ATCC 17760 / DSM 23089 / LMG 22485 / NCIMB 9086 / R18194 / 383)).